The sequence spans 208 residues: 3-demethoxyubiquinol 3-hydroxylase (208 aa).

Residues Glu-57, Glu-87, His-90, Glu-139, Glu-171, and His-174 each coordinate Fe cation.

It belongs to the COQ7 family. The cofactor is Fe cation.

It is found in the cell membrane. It carries out the reaction a 5-methoxy-2-methyl-3-(all-trans-polyprenyl)benzene-1,4-diol + AH2 + O2 = a 3-demethylubiquinol + A + H2O. It participates in cofactor biosynthesis; ubiquinone biosynthesis. In terms of biological role, catalyzes the hydroxylation of 2-nonaprenyl-3-methyl-6-methoxy-1,4-benzoquinol during ubiquinone biosynthesis. The sequence is that of 3-demethoxyubiquinol 3-hydroxylase from Burkholderia pseudomallei (strain 1106a).